We begin with the raw amino-acid sequence, 239 residues long: Pre-mRNA-splicing factor isy1 (239 aa).

This sequence belongs to the ISY1 family. As to quaternary structure, associated with the spliceosome.

It localises to the cytoplasm. The protein resides in the nucleus. Functionally, involved in pre-mRNA splicing. This Neurospora crassa (strain ATCC 24698 / 74-OR23-1A / CBS 708.71 / DSM 1257 / FGSC 987) protein is Pre-mRNA-splicing factor isy1 (msp-7).